We begin with the raw amino-acid sequence, 237 residues long: Purine nucleoside phosphorylase DeoD-type (237 aa).

His-4 serves as a coordination point for a purine D-ribonucleoside. Residues Gly-20, Arg-24, Arg-43, and 87–90 (RVGT) contribute to the phosphate site. A purine D-ribonucleoside contacts are provided by residues 179–181 (EME) and 203–204 (SD). The active-site Proton donor is Asp-204.

It belongs to the PNP/UDP phosphorylase family. In terms of assembly, homohexamer; trimer of homodimers.

The catalysed reaction is a purine D-ribonucleoside + phosphate = a purine nucleobase + alpha-D-ribose 1-phosphate. It carries out the reaction a purine 2'-deoxy-D-ribonucleoside + phosphate = a purine nucleobase + 2-deoxy-alpha-D-ribose 1-phosphate. Catalyzes the reversible phosphorolytic breakdown of the N-glycosidic bond in the beta-(deoxy)ribonucleoside molecules, with the formation of the corresponding free purine bases and pentose-1-phosphate. The sequence is that of Purine nucleoside phosphorylase DeoD-type from Streptococcus pyogenes serotype M12 (strain MGAS2096).